A 431-amino-acid polypeptide reads, in one-letter code: 3-phosphoshikimate 1-carboxyvinyltransferase (431 aa).

Residues Lys-26, Ser-27, and Arg-31 each contribute to the 3-phosphoshikimate site. A phosphoenolpyruvate-binding site is contributed by Lys-26. Residues Gly-100 and Arg-129 each contribute to the phosphoenolpyruvate site. 3-phosphoshikimate-binding residues include Ser-175, Ser-176, Gln-177, Asp-308, and Gln-335. A phosphoenolpyruvate-binding site is contributed by Gln-177. Asp-308 serves as the catalytic Proton acceptor. Arg-339, Arg-381, and Lys-412 together coordinate phosphoenolpyruvate.

The protein belongs to the EPSP synthase family. As to quaternary structure, monomer.

The protein localises to the cytoplasm. It carries out the reaction 3-phosphoshikimate + phosphoenolpyruvate = 5-O-(1-carboxyvinyl)-3-phosphoshikimate + phosphate. The protein operates within metabolic intermediate biosynthesis; chorismate biosynthesis; chorismate from D-erythrose 4-phosphate and phosphoenolpyruvate: step 6/7. Functionally, catalyzes the transfer of the enolpyruvyl moiety of phosphoenolpyruvate (PEP) to the 5-hydroxyl of shikimate-3-phosphate (S3P) to produce enolpyruvyl shikimate-3-phosphate and inorganic phosphate. This is 3-phosphoshikimate 1-carboxyvinyltransferase from Opitutus terrae (strain DSM 11246 / JCM 15787 / PB90-1).